A 199-amino-acid polypeptide reads, in one-letter code: Recombination protein RecR (199 aa).

The segment at 58–73 (CKKCFNLTSEDECEIC) adopts a C4-type zinc-finger fold. A Toprim domain is found at 81-175 (KLICVVAETK…KVTRIAYGLP (95 aa)).

This sequence belongs to the RecR family.

Its function is as follows. May play a role in DNA repair. It seems to be involved in an RecBC-independent recombinational process of DNA repair. It may act with RecF and RecO. In Prochlorococcus marinus (strain MIT 9301), this protein is Recombination protein RecR.